The primary structure comprises 94 residues: uncharacterized protein (94 aa).

The signal sequence occupies residues 1–19 (MKFSGLILGALALVSGAIA).

It belongs to the protease inhibitor I9 family.

This is an uncharacterized protein from Neurospora crassa (strain ATCC 24698 / 74-OR23-1A / CBS 708.71 / DSM 1257 / FGSC 987).